The primary structure comprises 394 residues: MNNSNRIRLTWISYLSYALTGALVIVTGIVMGNIAEYFNLPIASMSNTFTFLNAGILISIFLNAWLMEIIPLKRQLVFGFILMLIAIAGLMVGHNLMIFSISMFIFGVVSGITMSIGTFLVTHMYEGRQRGSRLLFTDSFFSMAGMIFPIAAAMLLARHIEWYWVYACIGLLYVGIFVLTLCSEFPVLGHKATDQSKPVVKEKWGVGVLFLAIAALCYILGQLGFIQWVPEYATKTFNMNISQAGQLVSNFWISYMIGMWIFSFILRFFDLQRIVTVLAAMATLAMYLFVSTDNPAYLSYYILALGFVSSAIYTTLITLGSLQTKVSSPKLVNFILTCGTVGTMLTFVVTGPIVANNGVHAALATANGLYLAVFILCLALGFFTKHRSHGHVTH.

Transmembrane regions (helical) follow at residues 11–31, 51–71, 76–96, 101–121, 134–154, 162–182, 206–226, 246–266, 274–294, 302–322, 334–354, and 363–383; these read WISYLSYALTGALVIVTGIVM, FLNAGILISIFLNAWLMEIIP, LVFGFILMLIAIAGLMVGHNL, ISMFIFGVVSGITMSIGTFLV, LLFTDSFFSMAGMIFPIAAAM, WYWVYACIGLLYVGIFVLTLC, VGVLFLAIAALCYILGQLGFI, QLVSNFWISYMIGMWIFSFIL, IVTVLAAMATLAMYLFVSTDN, ILALGFVSSAIYTTLITLGSL, FILTCGTVGTMLTFVVTGPIV, and LATANGLYLAVFILCLALGFF.

It belongs to the major facilitator superfamily. TsgA family.

It is found in the cell inner membrane. The protein is Protein TsgA homolog of Yersinia pseudotuberculosis serotype O:1b (strain IP 31758).